Consider the following 105-residue polypeptide: MAEKMEKTGQILQMQLKRFSRVEKAFYFSIAVTTLIVAISIIFMQTKLLQVQNDLTKINAQIEEKKTELDDAKQEVNELLRAERLKEIANSHDLQLNNENIRIAE.

The Cytoplasmic segment spans residues 1–24 (MAEKMEKTGQILQMQLKRFSRVEK). The helical transmembrane segment at 25 to 45 (AFYFSIAVTTLIVAISIIFMQ) threads the bilayer. Topologically, residues 46–105 (TKLLQVQNDLTKINAQIEEKKTELDDAKQEVNELLRAERLKEIANSHDLQLNNENIRIAE) are extracellular.

The protein belongs to the FtsL family.

Its subcellular location is the cell membrane. Its function is as follows. Essential cell division protein. This is Cell division protein FtsL from Streptococcus pneumoniae (strain ATCC BAA-255 / R6).